Here is a 325-residue protein sequence, read N- to C-terminus: 33 kDa chaperonin (325 aa).

Intrachain disulfides connect cysteine 260/cysteine 262 and cysteine 293/cysteine 296.

Belongs to the HSP33 family. Post-translationally, under oxidizing conditions two disulfide bonds are formed involving the reactive cysteines. Under reducing conditions zinc is bound to the reactive cysteines and the protein is inactive.

It localises to the cytoplasm. Its function is as follows. Redox regulated molecular chaperone. Protects both thermally unfolding and oxidatively damaged proteins from irreversible aggregation. Plays an important role in the bacterial defense system toward oxidative stress. This is 33 kDa chaperonin from Aquifex aeolicus (strain VF5).